The primary structure comprises 247 residues: Carboxy-S-adenosyl-L-methionine synthase (247 aa).

S-adenosyl-L-methionine contacts are provided by residues Tyr-40, 65–67 (GAS), 90–91 (DN), 122–123 (DI), Asn-137, and Arg-204.

Belongs to the class I-like SAM-binding methyltransferase superfamily. Cx-SAM synthase family. As to quaternary structure, homodimer.

It carries out the reaction prephenate + S-adenosyl-L-methionine = carboxy-S-adenosyl-L-methionine + 3-phenylpyruvate + H2O. In terms of biological role, catalyzes the conversion of S-adenosyl-L-methionine (SAM) to carboxy-S-adenosyl-L-methionine (Cx-SAM). This chain is Carboxy-S-adenosyl-L-methionine synthase, found in Pseudomonas putida (strain ATCC 47054 / DSM 6125 / CFBP 8728 / NCIMB 11950 / KT2440).